The sequence spans 270 residues: Phthiotriol/phenolphthiotriol dimycocerosates methyltransferase (270 aa).

The protein belongs to the methyltransferase superfamily. Phthiotriol/phenolphthiotriol dimycocerosates methyltransferase family.

In terms of biological role, catalyzes the methylation of the lipid moiety of the intermediate compounds phthiotriol and glycosylated phenolphthiotriol dimycoserosates to form phthiocerol dimycocerosates (DIM A) and glycosylated phenolphthiocerol dimycocerosates (PGL). The chain is Phthiotriol/phenolphthiotriol dimycocerosates methyltransferase from Mycobacterium bovis (strain ATCC BAA-935 / AF2122/97).